The primary structure comprises 307 residues: Transaldolase (307 aa).

Lysine 125 serves as the catalytic Schiff-base intermediate with substrate.

This sequence belongs to the transaldolase family. Type 1 subfamily. In terms of assembly, homodimer.

It localises to the cytoplasm. The catalysed reaction is D-sedoheptulose 7-phosphate + D-glyceraldehyde 3-phosphate = D-erythrose 4-phosphate + beta-D-fructose 6-phosphate. The protein operates within carbohydrate degradation; pentose phosphate pathway; D-glyceraldehyde 3-phosphate and beta-D-fructose 6-phosphate from D-ribose 5-phosphate and D-xylulose 5-phosphate (non-oxidative stage): step 2/3. In terms of biological role, transaldolase is important for the balance of metabolites in the pentose-phosphate pathway. In Pseudomonas aeruginosa (strain LESB58), this protein is Transaldolase.